A 440-amino-acid chain; its full sequence is Xylose isomerase (440 aa).

Active-site residues include H101 and D104. 7 residues coordinate Mg(2+): E232, E268, H271, D296, D307, D309, and D339.

The protein belongs to the xylose isomerase family. Homotetramer. Mg(2+) is required as a cofactor.

The protein resides in the cytoplasm. It carries out the reaction alpha-D-xylose = alpha-D-xylulofuranose. The sequence is that of Xylose isomerase from Salmonella dublin (strain CT_02021853).